A 251-amino-acid polypeptide reads, in one-letter code: Triosephosphate isomerase (251 aa).

Residue 8-10 (NWK) coordinates substrate. Catalysis depends on His97, which acts as the Electrophile. The Proton acceptor role is filled by Glu170. Residues Gly176, Ser215, and 236 to 237 (GG) contribute to the substrate site.

It belongs to the triosephosphate isomerase family. Homodimer.

The protein localises to the cytoplasm. The enzyme catalyses D-glyceraldehyde 3-phosphate = dihydroxyacetone phosphate. It participates in carbohydrate biosynthesis; gluconeogenesis. It functions in the pathway carbohydrate degradation; glycolysis; D-glyceraldehyde 3-phosphate from glycerone phosphate: step 1/1. Functionally, involved in the gluconeogenesis. Catalyzes stereospecifically the conversion of dihydroxyacetone phosphate (DHAP) to D-glyceraldehyde-3-phosphate (G3P). The protein is Triosephosphate isomerase of Nitratidesulfovibrio vulgaris (strain DSM 19637 / Miyazaki F) (Desulfovibrio vulgaris).